The following is a 491-amino-acid chain: Putative ABC transporter ATP-binding protein TDE_0906 (491 aa).

ABC transporter domains are found at residues 2–241 (INLN…KQGL) and 267–491 (LTLH…KERL). Residues 36–43 (GKSGCGKT) and 300–307 (GKNGCGKT) contribute to the ATP site.

The protein belongs to the ABC transporter superfamily.

The protein localises to the cell inner membrane. In terms of biological role, probably part of an ABC transporter complex. Responsible for energy coupling to the transport system. The protein is Putative ABC transporter ATP-binding protein TDE_0906 of Treponema denticola (strain ATCC 35405 / DSM 14222 / CIP 103919 / JCM 8153 / KCTC 15104).